A 359-amino-acid polypeptide reads, in one-letter code: MATH domain and coiled-coil domain-containing protein At2g42475 (359 aa).

The MATH domain maps to 6–128 (KTSFTFEIEN…NDKLIITVEV (123 aa)). The stretch at 146-337 (EFKELQDLYN…NLELMVLDFK (192 aa)) forms a coiled coil.

This chain is MATH domain and coiled-coil domain-containing protein At2g42475, found in Arabidopsis thaliana (Mouse-ear cress).